The following is a 324-amino-acid chain: D-alanine--D-alanine ligase (324 aa).

Positions 120–322 (NNYLRGFGVE…LKEILTEIIE (203 aa)) constitute an ATP-grasp domain. 149 to 204 (IDKLGLPLIVKPNDGGSSFGVTKVTNITQIQLAIRNAFNEGEGVLIESFIPGTEIT) contributes to the ATP binding site. Mg(2+) contacts are provided by aspartate 276, glutamate 289, and asparagine 291.

This sequence belongs to the D-alanine--D-alanine ligase family. Mg(2+) is required as a cofactor. Mn(2+) serves as cofactor.

Its subcellular location is the cytoplasm. The enzyme catalyses 2 D-alanine + ATP = D-alanyl-D-alanine + ADP + phosphate + H(+). It participates in cell wall biogenesis; peptidoglycan biosynthesis. Cell wall formation. The sequence is that of D-alanine--D-alanine ligase from Azobacteroides pseudotrichonymphae genomovar. CFP2.